We begin with the raw amino-acid sequence, 426 residues long: UDP-N-acetylglucosamine 1-carboxyvinyltransferase (426 aa).

Residue 24–25 (KN) participates in phosphoenolpyruvate binding. UDP-N-acetyl-alpha-D-glucosamine is bound at residue R95. C119 serves as the catalytic Proton donor. The residue at position 119 (C119) is a 2-(S-cysteinyl)pyruvic acid O-phosphothioketal. Residues 124 to 128 (RPVDQ), D308, and V330 each bind UDP-N-acetyl-alpha-D-glucosamine.

The protein belongs to the EPSP synthase family. MurA subfamily.

It localises to the cytoplasm. The enzyme catalyses phosphoenolpyruvate + UDP-N-acetyl-alpha-D-glucosamine = UDP-N-acetyl-3-O-(1-carboxyvinyl)-alpha-D-glucosamine + phosphate. The protein operates within cell wall biogenesis; peptidoglycan biosynthesis. Cell wall formation. Adds enolpyruvyl to UDP-N-acetylglucosamine. The sequence is that of UDP-N-acetylglucosamine 1-carboxyvinyltransferase from Deinococcus radiodurans (strain ATCC 13939 / DSM 20539 / JCM 16871 / CCUG 27074 / LMG 4051 / NBRC 15346 / NCIMB 9279 / VKM B-1422 / R1).